We begin with the raw amino-acid sequence, 249 residues long: Methylthioribulose-1-phosphate dehydratase (249 aa).

Cys-102 is a binding site for substrate. The Zn(2+) site is built by His-120 and His-122. Glu-148 (proton donor/acceptor) is an active-site residue. His-205 is a binding site for Zn(2+).

Belongs to the aldolase class II family. MtnB subfamily. The cofactor is Zn(2+).

The protein resides in the cytoplasm. The enzyme catalyses 5-(methylsulfanyl)-D-ribulose 1-phosphate = 5-methylsulfanyl-2,3-dioxopentyl phosphate + H2O. The protein operates within amino-acid biosynthesis; L-methionine biosynthesis via salvage pathway; L-methionine from S-methyl-5-thio-alpha-D-ribose 1-phosphate: step 2/6. Its function is as follows. Catalyzes the dehydration of methylthioribulose-1-phosphate (MTRu-1-P) into 2,3-diketo-5-methylthiopentyl-1-phosphate (DK-MTP-1-P). In Botryotinia fuckeliana (strain B05.10) (Noble rot fungus), this protein is Methylthioribulose-1-phosphate dehydratase.